The sequence spans 299 residues: Non-structural protein V (299 aa).

Residues 40 to 98 (SDNPGQEQATCKEEEAGASGLSKPCLSAIGSTEGGAPRIRGQGSGESDDDTETLGFPSR) form a disordered region. Residues 110 to 120 (YYVYDHSGEAV) are interaction with host STAT1. The span at 134 to 145 (GLDGDSTLSGGD) shows a compositional bias: low complexity. 2 disordered regions span residues 134 to 174 (GLDG…APIS) and 204 to 230 (PKLG…PIKK). The span at 146–160 (NESENSDVDIGEPDT) shows a compositional bias: acidic residues. Zn(2+)-binding residues include H232, C251, C255, C267, C269, C272, C276, and C279.

This sequence belongs to the paramyxoviruses V protein family. In terms of assembly, interacts with host IFIH1/MDA5 and DHX58/LGP2; these interactions are involved in the inhibition of the host type I interferon signaling pathway. Interacts with host TYK2; this interaction inhibits the type I interferon signaling pathway without affecting the type II pathway. Interacts with host IRF7; this interaction inhibits IRF7 translocation to the nucleus. Interacts with host CHUK. Interacts with host RELA/p65; this interaction inhibits the nuclear translocation of NF-KappaB. Interacts (via N-terminus) with host STAT1 and JAK1; these interactions inhibit STAT1 phosphorylation by Jak1 and thereby the type I interferon signaling pathway. Interacts (via C-terminus) with host STAT2; this interaction is involved in the inhibition of the host type I interferon signaling pathway. Forms a complex with host PPP1CA and PPP1CC; this interaction prevents dephosphorylation of host IFIH1/MDA5 and leads to the inhibition of the host type I interferon signaling pathway. Interacts with host IRF9; this interaction prevents the binding of IRF9 to STAT2 and thereby the type I interferon signaling pathway. Interacts with host RIGI regulatory protein (via CARDs domain) and host TRIM25 (via SPRY domain); these interactions prevent TRIM25-mediated ubiquitination of RIG-I and disrupts downstream RIG-I signaling.

Its subcellular location is the host cytoplasm. Plays an essential role in the inhibition of host immune response. Prevents the establishment of cellular antiviral state by blocking interferon-alpha/beta (IFN-alpha/beta) production and signaling pathway. Interacts with host IFIH1/MDA5 and DHX58/LGP2 to inhibit the transduction pathway involved in the activation of IFN-beta promoter, thus protecting the virus against cell antiviral state. Blocks the type I interferon signaling pathway by interacting with host TYK2 and thereby inhibiting downstream STAT1 and STAT2 phosphorylation. Blocks the type I interferon signaling pathway by disrupting the RIG-I signaling pathway. Moderately affects the type II interferon signaling. Prevents PP1alpha/gamma-mediated dephosphorylation of host IFIH1/MDA5 and thus blocks its activation. This is Non-structural protein V (P/V) from Measles virus (strain IP-3-Ca) (MeV).